Reading from the N-terminus, the 396-residue chain is MVAGTRCLLALLLPQVLLGGAAGLVPELGRRKFAAASSGRPSSQPSDEVLSEFELRLLSMFGLKQRPTPSRDAVVPPYMLDLYRRHSGQPGSPAPDHRLERAASRANTVRSFHHEESLEELPETSGKTTRRFFFNLSSIPTEEFITSAELQVFREQMQDALGNNSSFHHRINIYEIIKPATANSKFPVTRLLDTRLVNQNASRWESFDVTPAVMRWTAQGHANHGFVVEVAHLEEKQGVSKRHVRISRSLHQDEHSWSQIRPLLVTFGHDGKGHPLHKREKRQAKHKQRKRLKSSCKRHPLYVDFSDVGWNDWIVAPPGYHAFYCHGECPFPLADHLNSTNHAIVQTLVNSVNSKIPKACCVPTELSAISMLYLDENEKVVLKNYQDMVVEGCGCR.

An N-terminal signal peptide occupies residues 1–23 (MVAGTRCLLALLLPQVLLGGAAG). Residues 24 to 282 (LVPELGRRKF…GHPLHKREKR (259 aa)) constitute a propeptide, cleaved by PCSK5. Residues 84–121 (RRHSGQPGSPAPDHRLERAASRANTVRSFHHEESLEEL) are disordered. S87 is subject to Phosphoserine. N-linked (GlcNAc...) asparagine glycosylation is found at N135, N163, N164, and N200. Residues 271 to 293 (GKGHPLHKREKRQAKHKQRKRLK) are disordered. Positions 274 to 293 (HPLHKREKRQAKHKQRKRLK) are enriched in basic residues. 3 disulfides stabilise this stretch: C296-C361, C325-C393, and C329-C395. N-linked (GlcNAc...) (high mannose) asparagine glycosylation is present at N338.

It belongs to the TGF-beta family. As to quaternary structure, homodimer; disulfide-linked. Interacts with SOSTDC1. Interacts with GREM2, RGMA, RGMB and RGMC. Interacts with ASPN. Interacts with MAFP5. Interacts with FBN1 (via N-terminal domain) and FBN2. Interacts with type I receptor BMPR1A. Interacts with type II receptor BMPR2. Interacts with SCUBE3. Interacts with TNFAIP6 (primarily via Link domain); this interaction is inhibited by hyaluronan. Interacts with ERFE. Interacts with BMPR1A/ALK3; the interaction may induce HAMP expression. Forms heterodimers with BMP6 in vitro; the heterodimer then binds to its receptor BMPR1A /ALK3 and may induce HAMP expression. Interacts with TGFBR3. Particularly abundant in lung, spleen and colon and in low but significant levels in heart, brain, placenta, liver, skeletal muscle, kidney, pancreas, prostate, ovary and small intestine.

The protein localises to the secreted. In terms of biological role, growth factor of the TGF-beta superfamily that plays essential roles in many developmental processes, including cardiogenesis, neurogenesis, and osteogenesis. Induces cartilage and bone formation. Initiates the canonical BMP signaling cascade by associating with type I receptor BMPR1A and type II receptor BMPR2. Once all three components are bound together in a complex at the cell surface, BMPR2 phosphorylates and activates BMPR1A. In turn, BMPR1A propagates signal by phosphorylating SMAD1/5/8 that travel to the nucleus and act as activators and repressors of transcription of target genes. Also acts to promote expression of HAMP, via the interaction with its receptor BMPR1A/ALK3. Can also signal through non-canonical pathways such as ERK/MAP kinase signaling cascade that regulates osteoblast differentiation. Also stimulates the differentiation of myoblasts into osteoblasts via the EIF2AK3-EIF2A-ATF4 pathway by stimulating EIF2A phosphorylation which leads to increased expression of ATF4 which plays a central role in osteoblast differentiation. Acts as a positive regulator of odontoblast differentiation during mesenchymal tooth germ formation, expression is repressed during the bell stage by MSX1-mediated inhibition of CTNNB1 signaling. This Homo sapiens (Human) protein is Bone morphogenetic protein 2 (BMP2).